Reading from the N-terminus, the 250-residue chain is Large ribosomal subunit protein uL4 (250 aa).

Disordered regions lie at residues 1-20 (MQVT…DLPR) and 51-101 (YAGL…HGLD). A compositionally biased stretch (basic and acidic residues) spans 92–101 (PKAEKDHGLD).

This sequence belongs to the universal ribosomal protein uL4 family. As to quaternary structure, part of the 50S ribosomal subunit.

Its function is as follows. One of the primary rRNA binding proteins, this protein initially binds near the 5'-end of the 23S rRNA. It is important during the early stages of 50S assembly. It makes multiple contacts with different domains of the 23S rRNA in the assembled 50S subunit and ribosome. Functionally, forms part of the polypeptide exit tunnel. In Halobacterium salinarum (strain ATCC 29341 / DSM 671 / R1), this protein is Large ribosomal subunit protein uL4.